Reading from the N-terminus, the 239-residue chain is Lactate utilization protein A (239 aa).

The protein belongs to the LutA/YkgE family.

Functionally, is involved in L-lactate degradation and allows cells to grow with lactate as the sole carbon source. The polypeptide is Lactate utilization protein A (Bacillus cereus (strain G9842)).